Consider the following 281-residue polypeptide: Putative rRNA methyltransferase YqxC (281 aa).

Residues 6-67 enclose the S4 RNA-binding domain; sequence ERLDVLLVER…NPLRYVSRGG (62 aa).

It belongs to the TlyA family.

In Bacillus subtilis (strain 168), this protein is Putative rRNA methyltransferase YqxC (yqxC).